Reading from the N-terminus, the 291-residue chain is Probable cell wall amidase LytH (291 aa).

Positions 1 to 40 (MKKIEAWLSKKGLKNKRTLIVVIAFVLFIIFLFLLLNSNS) are cleaved as a signal peptide. The region spanning 41 to 105 (EDSGNITITE…WIAGWHTNLD (65 aa)) is the SH3b domain. A disordered region spans residues 118-140 (QGKTIVLDPGHGGSDQGASSNTK). A MurNAc-LAA domain is found at 122-286 (IVLDPGHGGS…LEQAIVDGLK (165 aa)).

This sequence belongs to the N-acetylmuramoyl-L-alanine amidase 3 family.

It localises to the secreted. In terms of biological role, probably involved in cell-wall metabolism. This is Probable cell wall amidase LytH (lytH) from Staphylococcus aureus (strain USA300).